Here is a 79-residue protein sequence, read N- to C-terminus: Protein S100-G (79 aa).

Ser-2 carries the post-translational modification N-acetylserine. EF-hand domains follow at residues 13–48 (IFEK…KGSS) and 45–79 (KGSS…KISQ). Residues Gln-26 and Glu-31 each coordinate Ca(2+). Position 47 is a phosphoserine (Ser-47). The Ca(2+) site is built by Asp-58, Asn-60, Asp-62, Glu-64, and Glu-69.

The protein belongs to the S-100 family.

This chain is Protein S100-G (S100G), found in Equus caballus (Horse).